A 99-amino-acid chain; its full sequence is Class II hydrophobin 2 (99 aa).

The first 15 residues, 1–15, serve as a signal peptide directing secretion; it reads MKFFVVAALFAGALA. Disulfide bonds link C30–C79 and C40–C70.

Belongs to the cerato-ulmin hydrophobin family. Homotetramer. Further self-assembles to form highly ordered films at water-air interfaces through intermolecular interactions.

Its subcellular location is the secreted. The protein localises to the cell wall. Functionally, aerial growth, conidiation, and dispersal of filamentous fungi in the environment rely upon a capability of their secreting small amphipathic proteins called hydrophobins (HPBs) with low sequence identity. Class I can self-assemble into an outermost layer of rodlet bundles on aerial cell surfaces, conferring cellular hydrophobicity that supports fungal growth, development and dispersal; whereas Class II form highly ordered films at water-air interfaces through intermolecular interactions but contribute nothing to the rodlet structure. HYD2 is a class II hydrophobin that contributes to the fruiting body development. This Cordyceps militaris (Caterpillar fungus) protein is Class II hydrophobin 2.